The following is a 557-amino-acid chain: Dihydroxy-acid dehydratase (557 aa).

Residue Asp78 participates in Mg(2+) binding. Cys119 is a binding site for [2Fe-2S] cluster. Positions 120 and 121 each coordinate Mg(2+). At Lys121 the chain carries N6-carboxylysine. Residue Cys192 coordinates [2Fe-2S] cluster. Glu442 serves as a coordination point for Mg(2+). Residue Ser468 is the Proton acceptor of the active site.

Belongs to the IlvD/Edd family. In terms of assembly, homodimer. [2Fe-2S] cluster is required as a cofactor. Requires Mg(2+) as cofactor.

It carries out the reaction (2R)-2,3-dihydroxy-3-methylbutanoate = 3-methyl-2-oxobutanoate + H2O. It catalyses the reaction (2R,3R)-2,3-dihydroxy-3-methylpentanoate = (S)-3-methyl-2-oxopentanoate + H2O. It participates in amino-acid biosynthesis; L-isoleucine biosynthesis; L-isoleucine from 2-oxobutanoate: step 3/4. It functions in the pathway amino-acid biosynthesis; L-valine biosynthesis; L-valine from pyruvate: step 3/4. Functions in the biosynthesis of branched-chain amino acids. Catalyzes the dehydration of (2R,3R)-2,3-dihydroxy-3-methylpentanoate (2,3-dihydroxy-3-methylvalerate) into 2-oxo-3-methylpentanoate (2-oxo-3-methylvalerate) and of (2R)-2,3-dihydroxy-3-methylbutanoate (2,3-dihydroxyisovalerate) into 2-oxo-3-methylbutanoate (2-oxoisovalerate), the penultimate precursor to L-isoleucine and L-valine, respectively. In Bacillus cytotoxicus (strain DSM 22905 / CIP 110041 / 391-98 / NVH 391-98), this protein is Dihydroxy-acid dehydratase.